Consider the following 289-residue polypeptide: Phosphatidylserine decarboxylase proenzyme (289 aa).

Residues D89, H146, and S252 each act as charge relay system; for autoendoproteolytic cleavage activity in the active site. The active-site Schiff-base intermediate with substrate; via pyruvic acid; for decarboxylase activity is S252. Pyruvic acid (Ser); by autocatalysis is present on S252.

The protein belongs to the phosphatidylserine decarboxylase family. PSD-B subfamily. Prokaryotic type I sub-subfamily. In terms of assembly, heterodimer of a large membrane-associated beta subunit and a small pyruvoyl-containing alpha subunit. Pyruvate serves as cofactor. In terms of processing, is synthesized initially as an inactive proenzyme. Formation of the active enzyme involves a self-maturation process in which the active site pyruvoyl group is generated from an internal serine residue via an autocatalytic post-translational modification. Two non-identical subunits are generated from the proenzyme in this reaction, and the pyruvate is formed at the N-terminus of the alpha chain, which is derived from the carboxyl end of the proenzyme. The autoendoproteolytic cleavage occurs by a canonical serine protease mechanism, in which the side chain hydroxyl group of the serine supplies its oxygen atom to form the C-terminus of the beta chain, while the remainder of the serine residue undergoes an oxidative deamination to produce ammonia and the pyruvoyl prosthetic group on the alpha chain. During this reaction, the Ser that is part of the protease active site of the proenzyme becomes the pyruvoyl prosthetic group, which constitutes an essential element of the active site of the mature decarboxylase.

It localises to the cell membrane. It catalyses the reaction a 1,2-diacyl-sn-glycero-3-phospho-L-serine + H(+) = a 1,2-diacyl-sn-glycero-3-phosphoethanolamine + CO2. Its pathway is phospholipid metabolism; phosphatidylethanolamine biosynthesis; phosphatidylethanolamine from CDP-diacylglycerol: step 2/2. Functionally, catalyzes the formation of phosphatidylethanolamine (PtdEtn) from phosphatidylserine (PtdSer). This Shewanella sp. (strain W3-18-1) protein is Phosphatidylserine decarboxylase proenzyme.